Consider the following 211-residue polypeptide: MQSAMFLAVQHDCVPMDKSAGNGPKVEEKREKMKRTLLKDWKTRLSYFLQNSSAPGKPKTGKKSKQQTFIKPSPEEAQLWAEAFDELLASKYGLAAFRAFLKSEFCEENIEFWLACEDFKKTKSPQKLSSKARKIYTDFIEKEAPKEINIDFQTKSLIAQNIQEATSGCFTTAQKRVYSLMENNSYPRFLESEFYQDLCKKPQITTEPHAT.

The segment at 32–66 (KMKRTLLKDWKTRLSYFLQNSSAPGKPKTGKKSKQ) is necessary for membrane association. Residues 79–116 (LWAEAFDELLASKYGLAAFRAFLKSEFCEENIEFWLAC) form a necessary to inhibit protein synthesis region. The region spanning 83 to 199 (AFDELLASKY…LESEFYQDLC (117 aa)) is the RGS domain.

Interacts with GNAQ. Does not interact with GNAI1 and GNAI3. Interacts with EIF2B5. Interacts with PRKG1 (isoform alpha). Post-translationally, phosphorylated by protein kinase C. Phosphorylation by PRKG1 leads to activation of RGS2 activity. In terms of tissue distribution, expressed in a wide variety of tissues.

The protein localises to the cell membrane. The protein resides in the cytoplasm. It localises to the nucleus. Its subcellular location is the nucleolus. In terms of biological role, regulates G protein-coupled receptor signaling cascades. Inhibits signal transduction by increasing the GTPase activity of G protein alpha subunits, thereby driving them into their inactive GDP-bound form. It is involved in the negative regulation of the angiotensin-activated signaling pathway. Plays a role in the regulation of blood pressure in response to signaling via G protein-coupled receptors and GNAQ. Plays a role in regulating the constriction and relaxation of vascular smooth muscle. Binds EIF2B5 and blocks its activity, thereby inhibiting the translation of mRNA into protein. The polypeptide is Regulator of G-protein signaling 2 (Rgs2) (Mus musculus (Mouse)).